Consider the following 728-residue polypeptide: Catalase-peroxidase 2 (728 aa).

A cross-link (tryptophyl-tyrosyl-methioninium (Trp-Tyr) (with M-240)) is located at residues 91–214 (WHAAGTYRTG…LAAVQMGLIY (124 aa)). Histidine 92 (proton acceptor) is an active-site residue. The segment at residues 214–240 (YVNPEGPNGNPDPAKAAVDIRETFARM) is a cross-link (tryptophyl-tyrosyl-methioninium (Tyr-Met) (with W-91)). Heme b is bound at residue histidine 255. A disordered region spans residues 338-362 (WKPNGDAGANSIPDPYDPSRRRGPT).

This sequence belongs to the peroxidase family. Peroxidase/catalase subfamily. In terms of assembly, homodimer or homotetramer. Requires heme b as cofactor. In terms of processing, formation of the three residue Trp-Tyr-Met cross-link is important for the catalase, but not the peroxidase activity of the enzyme.

The enzyme catalyses H2O2 + AH2 = A + 2 H2O. The catalysed reaction is 2 H2O2 = O2 + 2 H2O. Bifunctional enzyme with both catalase and broad-spectrum peroxidase activity. The sequence is that of Catalase-peroxidase 2 from Cupriavidus pinatubonensis (strain JMP 134 / LMG 1197) (Cupriavidus necator (strain JMP 134)).